Consider the following 101-residue polypeptide: Small ribosomal subunit protein uS14 (101 aa).

The segment at 1–26 (MAKVSSIKKNESRKKKSQSLHNKRSA) is disordered. Residues 11–26 (ESRKKKSQSLHNKRSA) show a composition bias toward basic residues.

It belongs to the universal ribosomal protein uS14 family. In terms of assembly, part of the 30S ribosomal subunit. Contacts proteins S3 and S10.

Functionally, binds 16S rRNA, required for the assembly of 30S particles and may also be responsible for determining the conformation of the 16S rRNA at the A site. The chain is Small ribosomal subunit protein uS14 from Rickettsia felis (strain ATCC VR-1525 / URRWXCal2) (Rickettsia azadi).